The primary structure comprises 381 residues: Acetylornithine deacetylase (381 aa).

His79 serves as a coordination point for Zn(2+). Asp81 is an active-site residue. Asp111 is a binding site for Zn(2+). Glu143 is an active-site residue. Glu144, Glu168, and His354 together coordinate Zn(2+).

Belongs to the peptidase M20A family. ArgE subfamily. In terms of assembly, homodimer. The cofactor is Zn(2+). It depends on Co(2+) as a cofactor. Glutathione is required as a cofactor.

The protein localises to the cytoplasm. It carries out the reaction N(2)-acetyl-L-ornithine + H2O = L-ornithine + acetate. The protein operates within amino-acid biosynthesis; L-arginine biosynthesis; L-ornithine from N(2)-acetyl-L-ornithine (linear): step 1/1. In terms of biological role, catalyzes the hydrolysis of the amide bond of N(2)-acetylated L-amino acids. Cleaves the acetyl group from N-acetyl-L-ornithine to form L-ornithine, an intermediate in L-arginine biosynthesis pathway, and a branchpoint in the synthesis of polyamines. The polypeptide is Acetylornithine deacetylase (Buchnera aphidicola subsp. Acyrthosiphon pisum (strain 5A)).